A 168-amino-acid chain; its full sequence is Variant surface antigen D (168 aa).

The first 29 residues, 1 to 29 (MKKSIFSKKLLVSFGSLVTLAAIPLIAIS), serve as a signal peptide directing secretion. C30 is lipidated: N-palmitoyl cysteine. C30 carries S-diacylglycerol cysteine lipidation. The interval 33 to 168 (TNTDQSQQPG…STSTSNMNTR (136 aa)) is disordered. 2 stretches are compositionally biased toward low complexity: residues 35–44 (TDQSQQPGSG) and 52–71 (GTTTGTDSTTGGQTGSESGT). Gly residues predominate over residues 72-81 (TTGGQTGTTT). A run of 7 repeats spans residues 81 to 92 (TGGQSDSTSTSK), 93 to 104 (EQGSSDSTSTSK), 105 to 116 (EQGSSDSTSTSK), 117 to 128 (EQGSSDSTSTSK), 129 to 140 (EQGSSDSTSTSK), 141 to 152 (EQGSSDSTSTSK), and 153 to 164 (EQGSSDSTSTSN). Residues 81 to 164 (TGGQSDSTST…GSSDSTSTSN (84 aa)) are 7 X 12 AA tandem repeats. The span at 82–168 (GGQSDSTSTS…STSTSNMNTR (87 aa)) shows a compositional bias: low complexity.

It localises to the cell membrane. Responsible for the antigenic diversity for host adaptation. Expression in E.coli of a construct containing vlpD, vlpE, and vlpF yields antigenically distinguishable products corresponding to each gene. The chain is Variant surface antigen D (vlpD) from Mesomycoplasma hyorhinis (Mycoplasma hyorhinis).